A 331-amino-acid chain; its full sequence is Ketol-acid reductoisomerase (NADP(+)) (331 aa).

One can recognise a KARI N-terminal Rossmann domain in the interval 2 to 182 (ARLYYDADAN…GGTRAGILET (181 aa)). Residues 25–28 (YGSQ), Ser-51, Ser-53, and 83–86 (DEVQ) each bind NADP(+). Residue His-108 is part of the active site. Position 134 (Gly-134) interacts with NADP(+). One can recognise a KARI C-terminal knotted domain in the interval 183 to 328 (TFREETETDL…KDLRAMFSWL (146 aa)). Mg(2+) contacts are provided by Asp-191, Glu-195, Glu-227, and Glu-231. Position 252 (Ser-252) interacts with substrate.

It belongs to the ketol-acid reductoisomerase family. Requires Mg(2+) as cofactor.

The catalysed reaction is (2R)-2,3-dihydroxy-3-methylbutanoate + NADP(+) = (2S)-2-acetolactate + NADPH + H(+). The enzyme catalyses (2R,3R)-2,3-dihydroxy-3-methylpentanoate + NADP(+) = (S)-2-ethyl-2-hydroxy-3-oxobutanoate + NADPH + H(+). It participates in amino-acid biosynthesis; L-isoleucine biosynthesis; L-isoleucine from 2-oxobutanoate: step 2/4. The protein operates within amino-acid biosynthesis; L-valine biosynthesis; L-valine from pyruvate: step 2/4. Functionally, involved in the biosynthesis of branched-chain amino acids (BCAA). Catalyzes an alkyl-migration followed by a ketol-acid reduction of (S)-2-acetolactate (S2AL) to yield (R)-2,3-dihydroxy-isovalerate. In the isomerase reaction, S2AL is rearranged via a Mg-dependent methyl migration to produce 3-hydroxy-3-methyl-2-ketobutyrate (HMKB). In the reductase reaction, this 2-ketoacid undergoes a metal-dependent reduction by NADPH to yield (R)-2,3-dihydroxy-isovalerate. In Cyanothece sp. (strain PCC 7425 / ATCC 29141), this protein is Ketol-acid reductoisomerase (NADP(+)).